An 83-amino-acid chain; its full sequence is Putative cytochrome b5 B11H24.095 (83 aa).

The region spanning 2–78 (SQTFTKSQVA…GTKLKVGTLA (77 aa)) is the Cytochrome b5 heme-binding domain. Heme contacts are provided by His-37 and His-60.

Belongs to the cytochrome b5 family.

The protein is Putative cytochrome b5 B11H24.095 of Neurospora crassa (strain ATCC 24698 / 74-OR23-1A / CBS 708.71 / DSM 1257 / FGSC 987).